A 249-amino-acid polypeptide reads, in one-letter code: tRNA pseudouridine synthase A (249 aa).

D53 acts as the Nucleophile in catalysis. Y111 provides a ligand contact to substrate.

Belongs to the tRNA pseudouridine synthase TruA family. Homodimer.

It catalyses the reaction uridine(38/39/40) in tRNA = pseudouridine(38/39/40) in tRNA. Its function is as follows. Formation of pseudouridine at positions 38, 39 and 40 in the anticodon stem and loop of transfer RNAs. The chain is tRNA pseudouridine synthase A from Streptococcus pneumoniae (strain Taiwan19F-14).